Reading from the N-terminus, the 350-residue chain is UDP-N-acetylenolpyruvoylglucosamine reductase (350 aa).

The region spanning 24–195 (HVDATARWLL…VAVEFNLPLL (172 aa)) is the FAD-binding PCMH-type domain. Arg172 is a catalytic residue. Ser245 functions as the Proton donor in the catalytic mechanism. Glu342 is an active-site residue.

It belongs to the MurB family. The cofactor is FAD.

It localises to the cytoplasm. The catalysed reaction is UDP-N-acetyl-alpha-D-muramate + NADP(+) = UDP-N-acetyl-3-O-(1-carboxyvinyl)-alpha-D-glucosamine + NADPH + H(+). It participates in cell wall biogenesis; peptidoglycan biosynthesis. In terms of biological role, cell wall formation. This is UDP-N-acetylenolpyruvoylglucosamine reductase from Xanthomonas campestris pv. campestris (strain 8004).